The sequence spans 448 residues: Glucose-6-phosphate isomerase (448 aa).

Glu290 serves as the catalytic Proton donor. Residues His311 and Lys425 contribute to the active site.

It belongs to the GPI family.

Its subcellular location is the cytoplasm. It catalyses the reaction alpha-D-glucose 6-phosphate = beta-D-fructose 6-phosphate. Its pathway is carbohydrate biosynthesis; gluconeogenesis. It participates in carbohydrate degradation; glycolysis; D-glyceraldehyde 3-phosphate and glycerone phosphate from D-glucose: step 2/4. Catalyzes the reversible isomerization of glucose-6-phosphate to fructose-6-phosphate. The sequence is that of Glucose-6-phosphate isomerase from Latilactobacillus sakei subsp. sakei (strain 23K) (Lactobacillus sakei subsp. sakei).